Here is a 28-residue protein sequence, read N- to C-terminus: Ranatuerin-2B (28 aa).

Cysteines 23 and 28 form a disulfide.

As to expression, expressed by the skin glands.

The protein resides in the secreted. Its function is as follows. Antibacterial activity against Gram-positive bacterium S.aureus and Gram-negative bacterium E.coli. Has activity against C.albicans. This is Ranatuerin-2B from Lithobates berlandieri (Rio Grande leopard frog).